The chain runs to 482 residues: Cobyric acid synthase (482 aa).

Residues 243–430 (ACKVVVPQLE…LHGLFTSDAF (188 aa)) form the GATase cobBQ-type domain. Catalysis depends on C325, which acts as the Nucleophile. The active site involves H422.

The protein belongs to the CobB/CobQ family. CobQ subfamily.

It participates in cofactor biosynthesis; adenosylcobalamin biosynthesis. In terms of biological role, catalyzes amidations at positions B, D, E, and G on adenosylcobyrinic A,C-diamide. NH(2) groups are provided by glutamine, and one molecule of ATP is hydrogenolyzed for each amidation. This Ruegeria sp. (strain TM1040) (Silicibacter sp.) protein is Cobyric acid synthase.